The chain runs to 459 residues: Cobyrinate a,c-diamide synthase (459 aa).

A GATase cobBQ-type domain is found at 252–446 (TLALADDEAF…LHVHFAQRPE (195 aa)). The active-site Nucleophile is the cysteine 334.

Belongs to the CobB/CbiA family. As to quaternary structure, monomer. Mg(2+) serves as cofactor.

It catalyses the reaction cob(II)yrinate + 2 L-glutamine + 2 ATP + 2 H2O = cob(II)yrinate a,c diamide + 2 L-glutamate + 2 ADP + 2 phosphate + 2 H(+). It participates in cofactor biosynthesis; adenosylcobalamin biosynthesis; cob(II)yrinate a,c-diamide from sirohydrochlorin (anaerobic route): step 10/10. Catalyzes the ATP-dependent amidation of the two carboxylate groups at positions a and c of cobyrinate, using either L-glutamine or ammonia as the nitrogen source. Is able to use other nucleotide triphosphates as substrate, such as GTP or UTP, although less efficiently than ATP. The sequence is that of Cobyrinate a,c-diamide synthase from Salmonella typhimurium (strain LT2 / SGSC1412 / ATCC 700720).